Reading from the N-terminus, the 94-residue chain is Large ribosomal subunit protein uL23c (94 aa).

It belongs to the universal ribosomal protein uL23 family. Part of the 50S ribosomal subunit.

It localises to the plastid. Its subcellular location is the chloroplast. Functionally, binds to 23S rRNA. This Tupiella akineta (Green alga) protein is Large ribosomal subunit protein uL23c (rpl23).